The primary structure comprises 239 residues: Purine nucleoside phosphorylase DeoD-type (239 aa).

Position 5 (histidine 5) interacts with a purine D-ribonucleoside. Residues glycine 21, arginine 25, arginine 44, and 88–91 (RVGS) contribute to the phosphate site. Residues 180–182 (EME) and 204–205 (SD) each bind a purine D-ribonucleoside. Aspartate 205 functions as the Proton donor in the catalytic mechanism.

The protein belongs to the PNP/UDP phosphorylase family. As to quaternary structure, homohexamer; trimer of homodimers.

The catalysed reaction is a purine D-ribonucleoside + phosphate = a purine nucleobase + alpha-D-ribose 1-phosphate. It carries out the reaction a purine 2'-deoxy-D-ribonucleoside + phosphate = a purine nucleobase + 2-deoxy-alpha-D-ribose 1-phosphate. In terms of biological role, catalyzes the reversible phosphorolytic breakdown of the N-glycosidic bond in the beta-(deoxy)ribonucleoside molecules, with the formation of the corresponding free purine bases and pentose-1-phosphate. The chain is Purine nucleoside phosphorylase DeoD-type from Klebsiella pneumoniae (strain 342).